Here is a 443-residue protein sequence, read N- to C-terminus: Trihelix transcription factor ASIL2 (443 aa).

The disordered stretch occupies residues 1–82 (MEDDEDIRSQ…RPTGGGGRED (82 aa)). Polar residues predominate over residues 38 to 48 (YSLTPPGNSSQ). A compositionally biased stretch (gly residues) spans 64 to 78 (SGGGNNSSGRPTGGG). The Myb-like domain maps to 84-144 (WSEAATAVLI…QCKNRIDTVK (61 aa)). Disordered stretches follow at residues 238–350 (FGGS…GNKW) and 413–443 (RRMG…LGNN). Positions 239 to 249 (GGSGGGGGGGS) are enriched in gly residues. Positions 271–286 (TLPQQGRTLPQQQQQG) are enriched in low complexity. Residues 290–303 (KRCSESKRWRFRKR) carry the Bipartite nuclear localization signal motif. Residues 333–350 (MKTEEKKKQDGDGVGNKW) show a composition bias toward basic and acidic residues. Residues 360–414 (FGEAYEQTENAKLQQVVEMEKERMKFLKELELQRMQFFVKTQLEISQLKQQHGRR) adopt a coiled-coil conformation. Over residues 428–443 (NNINAIVNNNNDLGNN) the composition is skewed to low complexity.

It is found in the nucleus. In terms of biological role, transcription regulator that may repress the maturation program during early embryogenesis. This chain is Trihelix transcription factor ASIL2, found in Arabidopsis thaliana (Mouse-ear cress).